We begin with the raw amino-acid sequence, 185 residues long: Ribosome maturation factor RimM (185 aa).

The 75-residue stretch at 103–177 folds into the PRC barrel domain; sequence SEEYYWYEIL…SIIVKKIEWY (75 aa).

This sequence belongs to the RimM family. As to quaternary structure, binds ribosomal protein uS19.

The protein resides in the cytoplasm. In terms of biological role, an accessory protein needed during the final step in the assembly of 30S ribosomal subunit, possibly for assembly of the head region. Essential for efficient processing of 16S rRNA. May be needed both before and after RbfA during the maturation of 16S rRNA. It has affinity for free ribosomal 30S subunits but not for 70S ribosomes. This Petrotoga mobilis (strain DSM 10674 / SJ95) protein is Ribosome maturation factor RimM.